The sequence spans 157 residues: MEDQIRQLKDIFDRFDMDADGSLTILELAALLRSLGLKPSGDQIHVLLASMDSNGNGFVEFDELVGTILPDLNEEVLINSEQLLEIFKSFDRDGNGFISAAELAGAMAKMGQPLTYKELTEMIKEADTNGDGVISFGEFASIMAKSAVDYFGLKINS.

EF-hand domains are found at residues 3–38 (DQIR…LGLK), 39–74 (PSGD…DLNE), 78–113 (INSE…MGQP), and 114–149 (LTYK…SAVD). Positions 16, 18, 20, 22, 27, 52, 54, 56, 63, 91, 93, 95, 102, 127, 129, 131, and 138 each coordinate Ca(2+).

Potential calcium sensor. This is Probable calcium-binding protein CML15 (CML15) from Arabidopsis thaliana (Mouse-ear cress).